Consider the following 188-residue polypeptide: dCTP deaminase (188 aa).

Residues Lys-111–Arg-116, Thr-135–Glu-137, Gln-156, Tyr-170, Lys-179, and Gln-180 contribute to the dCTP site. The active-site Proton donor/acceptor is Glu-137.

The protein belongs to the dCTP deaminase family. As to quaternary structure, homotrimer.

It carries out the reaction dCTP + H2O + H(+) = dUTP + NH4(+). The protein operates within pyrimidine metabolism; dUMP biosynthesis; dUMP from dCTP (dUTP route): step 1/2. Functionally, catalyzes the deamination of dCTP to dUTP. This is dCTP deaminase from Rickettsia typhi (strain ATCC VR-144 / Wilmington).